The following is a 496-amino-acid chain: E1B 55 kDa protein (496 aa).

Positions 1-74 (MERRNPSERG…EPESRPGPSG (74 aa)) are disordered. Residues 45-61 (GGAAAAAGGSQAAAAGA) are compositionally biased toward low complexity. Serine 490 and serine 491 each carry phosphoserine. Phosphothreonine is present on threonine 495.

Belongs to the adenoviridae E1B 55 kDa protein family. Interacts with host PML-4 and PML-5; this interaction promotes efficient subnuclear targeting of E1B-55K to PML nuclear bodies. Interacts with E4-ORF3 protein. Interacts with E4-ORF6 protein. In terms of processing, phosphorylation at the C-terminus affects the subcellular location.

It localises to the host nucleus. The protein localises to the host cytoplasm. Plays a major role to prevent cellular inhibition of viral genome replication. Assembles an SCF-like E3 ubiquitin ligase complex based on the cellular proteins ELOB, ELOC, CUL5 and RBX1, in cooperation with viral E4orf6. This viral RING-type ligase ubiquitinates cellular substrates and targets them to proteasomal degradation: TP53/p53, LIG4, MRE11-RAD50-NBS1 (MRN) complex, ITGA3, DAXX and BLM. E1B-55K probably acts as the substrate-specific adapter of the SCF-like E3 ubiquitin ligase complex. Degradation of host TP53/p53 activity is essential for preventing E1A-induced TP53 accumulation that would otherwise lead to cell apoptosis and growth arrest. E1B-55K also inactivates TP53 transcription-factor activity by binding its transactivation domain. E1B-55K also functions as a SUMO1 E3 ligase for TP53 which causes the latter to be sequestered in promyelocytic leukemia (PML) nuclear bodies thereby contributing to maximal inhibition of TP53 function. The polypeptide is E1B 55 kDa protein (Homo sapiens (Human)).